We begin with the raw amino-acid sequence, 389 residues long: Alanine racemase (389 aa).

K46 serves as the catalytic Proton acceptor; specific for D-alanine. K46 carries the N6-(pyridoxal phosphate)lysine modification. R144 lines the substrate pocket. Y275 functions as the Proton acceptor; specific for L-alanine in the catalytic mechanism. M323 contributes to the substrate binding site.

The protein belongs to the alanine racemase family. Requires pyridoxal 5'-phosphate as cofactor.

The catalysed reaction is L-alanine = D-alanine. It participates in amino-acid biosynthesis; D-alanine biosynthesis; D-alanine from L-alanine: step 1/1. Catalyzes the interconversion of L-alanine and D-alanine. May also act on other amino acids. This chain is Alanine racemase (alr), found in Mycolicibacterium smegmatis (strain ATCC 700084 / mc(2)155) (Mycobacterium smegmatis).